Consider the following 1203-residue polypeptide: Metabotropic glutamate receptor 5 (1203 aa).

Residues 1-20 (MVLLLILSVLLLKEDVRGSA) form the signal peptide. Topologically, residues 21-579 (QSSERRVVAH…QYLRWGDPEP (559 aa)) are extracellular. An intrachain disulfide couples Cys57 to Cys99. L-glutamate is bound at residue Tyr64. Asn88 is a glycosylation site (N-linked (GlcNAc...) asparagine). L-glutamate contacts are provided by residues Ser151 and 172–174 (SAT). The N-linked (GlcNAc...) asparagine glycan is linked to Asn209. Tyr222 serves as a coordination point for L-glutamate. 8 disulfides stabilise this stretch: Cys240/Cys529, Cys275/Cys277, Cys364/Cys380, Cys418/Cys425, Cys510/Cys530, Cys514/Cys533, Cys536/Cys548, and Cys551/Cys564. Residue Asp304 participates in L-glutamate binding. Residues Asn377 and Asn381 are each glycosylated (N-linked (GlcNAc...) asparagine). Lys395 contacts L-glutamate. Asn444 carries N-linked (GlcNAc...) asparagine glycosylation. The chain crosses the membrane as a helical span at residues 580–602 (IAAVVFACLGLLATLFVTVIFII). Over 603 to 612 (YRDTPVVKSS) the chain is Cytoplasmic. The chain crosses the membrane as a helical span at residues 613 to 635 (SRELCYIILAGICLGYLCTFCLI). Residues 636–643 (AKPKQIYC) are Extracellular-facing. Residues Cys643 and Cys732 are joined by a disulfide bond. The chain crosses the membrane as a helical span at residues 644–666 (YLQRIGIGLSPAMSYSALVTKTN). The Cytoplasmic portion of the chain corresponds to 667–692 (RIARILAGSKKKICTKKPRFMSACAQ). A helical membrane pass occupies residues 693-713 (LVIAFILICIQLGIIVALFIM). Topologically, residues 714 to 736 (EPPDIMHDYPSIREVYLICNTTN) are extracellular. The N-linked (GlcNAc...) asparagine glycan is linked to Asn733. Residues 737–758 (LGVVTPLGYNGLLILSCTFYAF) traverse the membrane as a helical segment. Topologically, residues 759–771 (KTRNVPANFNEAK) are cytoplasmic. A helical transmembrane segment spans residues 772–794 (YIAFTMYTTCIIWLAFVPIYFGS). Residues 795 to 797 (NYK) lie on the Extracellular side of the membrane. A helical membrane pass occupies residues 798 to 819 (IITMCFSVSLSATVALGCMFVP). Residues 820-1203 (KVYIILAKPE…RDYTQSSSSL (384 aa)) lie on the Cytoplasmic side of the membrane. Ser860 is modified (phosphoserine). Arg868 is subject to Omega-N-methylarginine. Disordered regions lie at residues 892 to 970 (FTPK…GSGP), 1003 to 1054 (EESF…GSLM), and 1122 to 1182 (GAQG…ALCI). Over residues 905–920 (TMSSSNGKSVTWAQNE) the composition is skewed to polar residues. Arg924 carries the post-translational modification Omega-N-methylarginine. Residues 1007-1017 (PAAARPRSPSP) show a composition bias toward low complexity. 2 positions are modified to phosphoserine: Ser1014 and Ser1016. 2 stretches are compositionally biased toward polar residues: residues 1039-1054 (HSETAARSSSSQGSLM) and 1165-1176 (DSGSTTPNSPVS).

This sequence belongs to the G-protein coupled receptor 3 family. As to quaternary structure, interacts with RYR1, RYR2, ITPR1, SHANK1 and SHANK3. The PPXXF motif binds HOMER1, HOMER2 and HOMER3. Interacts with SIAH1 and TAMALIN. Interacts with NCDN. Interacts with NECAB2. Interacts with CAMK2A. In terms of tissue distribution, widely distributed in neuronal cells of the central nervous system.

It is found in the cell membrane. Functionally, G-protein coupled receptor for glutamate. Ligand binding causes a conformation change that triggers signaling via guanine nucleotide-binding proteins (G proteins) and modulates the activity of down-stream effectors. Signaling activates a phosphatidylinositol-calcium second messenger system and generates a calcium-activated chloride current. Plays an important role in the regulation of synaptic plasticity and the modulation of the neural network activity. This chain is Metabotropic glutamate receptor 5 (Grm5), found in Rattus norvegicus (Rat).